We begin with the raw amino-acid sequence, 138 residues long: ATP synthase epsilon chain, chloroplastic (138 aa).

This sequence belongs to the ATPase epsilon chain family. In terms of assembly, F-type ATPases have 2 components, CF(1) - the catalytic core - and CF(0) - the membrane proton channel. CF(1) has five subunits: alpha(3), beta(3), gamma(1), delta(1), epsilon(1). CF(0) has three main subunits: a, b and c.

It localises to the plastid. It is found in the chloroplast thylakoid membrane. Produces ATP from ADP in the presence of a proton gradient across the membrane. This chain is ATP synthase epsilon chain, chloroplastic, found in Galdieria sulphuraria (Red alga).